Here is a 237-residue protein sequence, read N- to C-terminus: Large ribosomal subunit protein uL1 (237 aa).

This sequence belongs to the universal ribosomal protein uL1 family. As to quaternary structure, part of the 50S ribosomal subunit.

Binds directly to 23S rRNA. The L1 stalk is quite mobile in the ribosome, and is involved in E site tRNA release. Its function is as follows. Protein L1 is also a translational repressor protein, it controls the translation of the L11 operon by binding to its mRNA. This is Large ribosomal subunit protein uL1 from Corynebacterium kroppenstedtii (strain DSM 44385 / JCM 11950 / CIP 105744 / CCUG 35717).